The following is a 198-amino-acid chain: Protein GrpE (198 aa).

Basic and acidic residues predominate over residues 1-21 (MMKKAEDPLQDREGTIQEHTE). Residues 1 to 56 (MMKKAEDPLQDREGTIQEHTEGQAGTAAADQSAAVETPESRIAGLEREVQAEKEQN) are disordered. The span at 22–34 (GQAGTAAADQSAA) shows a compositional bias: low complexity. Residues 44 to 56 (GLEREVQAEKEQN) are compositionally biased toward basic and acidic residues.

It belongs to the GrpE family. Homodimer.

The protein localises to the cytoplasm. In terms of biological role, participates actively in the response to hyperosmotic and heat shock by preventing the aggregation of stress-denatured proteins, in association with DnaK and GrpE. It is the nucleotide exchange factor for DnaK and may function as a thermosensor. Unfolded proteins bind initially to DnaJ; upon interaction with the DnaJ-bound protein, DnaK hydrolyzes its bound ATP, resulting in the formation of a stable complex. GrpE releases ADP from DnaK; ATP binding to DnaK triggers the release of the substrate protein, thus completing the reaction cycle. Several rounds of ATP-dependent interactions between DnaJ, DnaK and GrpE are required for fully efficient folding. The sequence is that of Protein GrpE from Chlorobium luteolum (strain DSM 273 / BCRC 81028 / 2530) (Pelodictyon luteolum).